The following is a 755-amino-acid chain: Dolichyl-phosphate-mannose--protein mannosyltransferase 4 (755 aa).

The segment at 1 to 23 is disordered; it reads MSQTLKKRGGNSSGRKSPTTSNI. An N-linked (GlcNAc...) asparagine glycan is attached at Asn-11. Polar residues predominate over residues 13 to 23; that stretch reads SGRKSPTTSNI. A run of 6 helical transmembrane segments spans residues 92–112, 147–167, 185–205, 212–232, 237–257, and 278–298; these read FFDL…WLIG, IVPI…ACLF, ILLD…YSKF, SFSS…SCVI, VGVF…WILL, and ALII…FAIL. MIR domains lie at 325-389, 396-454, and 466-523; these read SKPV…IVPT, GTKV…LRLH, and KKEI…FDLI. Residue Asn-445 is glycosylated (N-linked (GlcNAc...) asparagine). Helical transmembrane passes span 595–615, 640–660, and 670–690; these read IFFI…SIYI, LYNT…PFFL, and YLPA…FICS. Asn-691 carries an N-linked (GlcNAc...) asparagine glycan. The chain crosses the membrane as a helical span at residues 706-726; the sequence is YKIIAVVAACSTAIIWFFFYF.

It belongs to the glycosyltransferase 39 family. Forms a functional homodimer.

The protein localises to the endoplasmic reticulum membrane. The catalysed reaction is a di-trans,poly-cis-dolichyl beta-D-mannosyl phosphate + L-seryl-[protein] = 3-O-(alpha-D-mannosyl)-L-seryl-[protein] + a di-trans,poly-cis-dolichyl phosphate + H(+). The enzyme catalyses a di-trans,poly-cis-dolichyl beta-D-mannosyl phosphate + L-threonyl-[protein] = 3-O-(alpha-D-mannosyl)-L-threonyl-[protein] + a di-trans,poly-cis-dolichyl phosphate + H(+). Its pathway is protein modification; protein glycosylation. In terms of biological role, protein mannosyltransferase (PMT) involved in hyphal growth and drug sensitivity. Transfers mannose from Dol-P-mannose to Ser or Thr residues on proteins. PMT1, PMT2 and PMT4 account for most of the protein-O-glycosylation activity, while PMT5 and PMT6 may specifically modulate a much narrower spectrum of target proteins. Accounts for the O-glycosylation of AXL2, responsible for bud site selection, as well as of the SEC20 t-SNARE component. O-glycosylation of SEC20 is essential for its stability. Required for biofilm formation. This Candida albicans (strain SC5314 / ATCC MYA-2876) (Yeast) protein is Dolichyl-phosphate-mannose--protein mannosyltransferase 4.